The primary structure comprises 95 residues: MIKKEEVEKIAGLAYLKLSDEERETFTRQLGDILDYVEKLNELDTDGVVPTAYTVPMKNVLRDDKVGSSIPREEALDNAPDKKDGLFRVPSIIGE.

Belongs to the GatC family. As to quaternary structure, heterotrimer of A, B and C subunits.

It carries out the reaction L-glutamyl-tRNA(Gln) + L-glutamine + ATP + H2O = L-glutaminyl-tRNA(Gln) + L-glutamate + ADP + phosphate + H(+). It catalyses the reaction L-aspartyl-tRNA(Asn) + L-glutamine + ATP + H2O = L-asparaginyl-tRNA(Asn) + L-glutamate + ADP + phosphate + 2 H(+). Allows the formation of correctly charged Asn-tRNA(Asn) or Gln-tRNA(Gln) through the transamidation of misacylated Asp-tRNA(Asn) or Glu-tRNA(Gln) in organisms which lack either or both of asparaginyl-tRNA or glutaminyl-tRNA synthetases. The reaction takes place in the presence of glutamine and ATP through an activated phospho-Asp-tRNA(Asn) or phospho-Glu-tRNA(Gln). This is Aspartyl/glutamyl-tRNA(Asn/Gln) amidotransferase subunit C from Halothermothrix orenii (strain H 168 / OCM 544 / DSM 9562).